We begin with the raw amino-acid sequence, 486 residues long: UDP-N-acetylmuramate--L-alanine ligase (486 aa).

123 to 129 (GTHGKTT) contributes to the ATP binding site.

This sequence belongs to the MurCDEF family.

The protein localises to the cytoplasm. The enzyme catalyses UDP-N-acetyl-alpha-D-muramate + L-alanine + ATP = UDP-N-acetyl-alpha-D-muramoyl-L-alanine + ADP + phosphate + H(+). It functions in the pathway cell wall biogenesis; peptidoglycan biosynthesis. In terms of biological role, cell wall formation. The chain is UDP-N-acetylmuramate--L-alanine ligase from Pseudomonas syringae pv. syringae (strain B728a).